The primary structure comprises 727 residues: E3 SUMO-protein ligase pli1 (727 aa).

An SAP domain is found at 18–52; that stretch reads ETGLIIPQLKDILRVFGLRLSGTKAELITRIKQLI. The PINIT domain maps to 108–261; sequence YSRPFAPVVH…SVVVCFVKVY (154 aa). The SP-RING-type zinc finger occupies 290–371; the sequence is QDADIIATST…MQHILESTPS (82 aa). The Zn(2+) site is built by C321, H323, C344, and C347. 2 positions are modified to phosphoserine: S395 and S396. Disordered regions lie at residues 408-558 and 706-727; these read ELSD…TQHS and QSNNSYHNSGFEGTGNTFQSID. Polar residues-rich tracts occupy residues 417–435 and 459–494; these read TMANKSNDQPTRRASTHNS and VATSTTESPSNATKENSLSRNVQSPNIDTAISNRST. The span at 546 to 558 shows a compositional bias: low complexity; sequence SQQNNNNSNTQHS.

This sequence belongs to the PIAS family. Interacts with hus5/ubc9.

The protein localises to the nucleus. The protein operates within protein modification; protein sumoylation. Acts as an E3 ligase mediating SUMO/Smt3 attachment to other proteins. Involved in the maintenance of the centromere and in telomere length. Regulates recombination, via extension sumoylation, particularly within the heterochromatin repeats. This is E3 SUMO-protein ligase pli1 (pli1) from Schizosaccharomyces pombe (strain 972 / ATCC 24843) (Fission yeast).